Reading from the N-terminus, the 251-residue chain is Elongator complex protein 6 (251 aa).

It belongs to the ELP6 family. As to quaternary structure, component of the elongator complex composed of Elp1, Elp2, Elp3, Elp4, Elp5 and Elp6. The elongator complex associates with and stabilizes microtubules; efficient interaction requires the full complex. Interacts with InR/Insulin-like receptor; the interaction may stabilize Elp6.

The protein localises to the cytoplasm. The protein resides in the nucleus. It is found in the cytoskeleton. Its subcellular location is the spindle. It participates in tRNA modification; 5-methoxycarbonylmethyl-2-thiouridine-tRNA biosynthesis. Component of the elongator complex, which is required for multiple tRNA modifications, including mcm5U (5-methoxycarbonylmethyl uridine), mcm5s2U (5-methoxycarbonylmethyl-2-thiouridine), and ncm5U (5-carbamoylmethyl uridine). The elongator complex catalyzes formation of carboxymethyluridine in the wobble base at position 34 in tRNAs. Binding by the elongator complex stabilizes microtubules and promotes their growth. This induces central spindle asymmetry, promoting polarized signaling endosome trafficking during asymmetric cell division and cell fate assignation of sensory organ precursor cells. Required in germ line cells for microtubule organization involved in oocyte polarization and chromosome organization. Involved in InR-TOR (insulin-like receptor-target of rapamycin) signaling regulation of cellular metabolism, autophagy and apoptosis. This is Elongator complex protein 6 from Drosophila melanogaster (Fruit fly).